A 269-amino-acid chain; its full sequence is Small ribosomal subunit protein uS2 (269 aa).

A disordered region spans residues 228–269 (QLDSDDDYEEFDESLAEGDYDDYDEEEDEDSETVSSQEGEEE). Over residues 230–269 (DSDDDYEEFDESLAEGDYDDYDEEEDEDSETVSSQEGEEE) the composition is skewed to acidic residues.

The protein belongs to the universal ribosomal protein uS2 family.

The sequence is that of Small ribosomal subunit protein uS2 from Crocosphaera subtropica (strain ATCC 51142 / BH68) (Cyanothece sp. (strain ATCC 51142)).